Consider the following 174-residue polypeptide: ATP synthase subunit b (174 aa).

Residues 15 to 33 traverse the membrane as a helical segment; it reads NPGLVIWTLVTFSVVVFVL.

Belongs to the ATPase B chain family. In terms of assembly, F-type ATPases have 2 components, F(1) - the catalytic core - and F(0) - the membrane proton channel. F(1) has five subunits: alpha(3), beta(3), gamma(1), delta(1), epsilon(1). F(0) has three main subunits: a(1), b(2) and c(10-14). The alpha and beta chains form an alternating ring which encloses part of the gamma chain. F(1) is attached to F(0) by a central stalk formed by the gamma and epsilon chains, while a peripheral stalk is formed by the delta and b chains.

It is found in the cell inner membrane. Its function is as follows. F(1)F(0) ATP synthase produces ATP from ADP in the presence of a proton or sodium gradient. F-type ATPases consist of two structural domains, F(1) containing the extramembraneous catalytic core and F(0) containing the membrane proton channel, linked together by a central stalk and a peripheral stalk. During catalysis, ATP synthesis in the catalytic domain of F(1) is coupled via a rotary mechanism of the central stalk subunits to proton translocation. Functionally, component of the F(0) channel, it forms part of the peripheral stalk, linking F(1) to F(0). The chain is ATP synthase subunit b from Leptospira biflexa serovar Patoc (strain Patoc 1 / Ames).